A 791-amino-acid polypeptide reads, in one-letter code: Cytochrome c oxidase polypeptide I+III (791 aa).

The COX1 stretch occupies residues 1–473 (MAITAKPKAG…LLSTIGAYIL (473 aa)). Residues 29–49 (LMYTATAFFAFALAGVFSLLI) form a helical membrane-spanning segment. His-73 provides a ligand contact to Fe(II)-heme a. 17 helical membrane passes run 78–98 (LFFF…VPLM), 111–131 (AFSY…YFFP), 155–175 (FYLA…ANFV), 201–221 (ASVL…LVLL), 244–264 (FFWF…LGIL), 282–302 (MVWA…HHMF), 312–332 (IAFA…LFNI), 347–367 (LYWV…GVML), 381–401 (FVVA…AFAG), 423–443 (FWLF…LGYL), 464–484 (LLST…IYTM), 566–586 (FAFF…WVFL), 617–637 (AWMG…ILIA), 657–677 (LWLA…VHFA), 691–711 (FGLL…SWEF), 729–749 (FFTI…GLIL), and 771–791 (SMYW…FYVW). Residues His-250, Tyr-254, His-299, and His-300 each coordinate Cu cation. A cross-link (1'-histidyl-3'-tyrosine (His-Tyr)) is located at residues 250 to 254 (HPTVY). His-385 lines the heme a3 pocket. His-387 serves as a coordination point for Fe(II)-heme a. The COX3 stretch occupies residues 545 to 791 (DPAHIHLPNS…LVIVTIFYVW (247 aa)).

The protein in the N-terminal section; belongs to the heme-copper respiratory oxidase family. It in the C-terminal section; belongs to the cytochrome c oxidase subunit 3 family. In terms of assembly, possibly a heterodimer of A-protein (contains: cytochrome c oxidase subunits I and III) and subunit II. The A-protein could also present a precursor form of subunits I and III. It depends on Cu(2+) as a cofactor. The cofactor is heme.

Its subcellular location is the cell membrane. The enzyme catalyses 4 Fe(II)-[cytochrome c] + O2 + 8 H(+)(in) = 4 Fe(III)-[cytochrome c] + 2 H2O + 4 H(+)(out). The protein operates within energy metabolism; oxidative phosphorylation. In terms of biological role, cytochrome c oxidase is the component of the respiratory chain that catalyzes the reduction of oxygen to water. Subunits 1-3 form the functional core of the enzyme complex. Co I is the catalytic subunit of the enzyme. Electrons originating in cytochrome c are transferred via the copper A center of subunit 2 and heme a of subunit 1 to the bimetallic center formed by heme a3 and copper B. This cytochrome c oxidase shows proton pump activity across the membrane in addition to the electron transfer. In Thermus thermophilus (strain ATCC 27634 / DSM 579 / HB8), this protein is Cytochrome c oxidase polypeptide I+III (caaA).